The following is a 780-amino-acid chain: Protein AMEIOTIC 1 (780 aa).

Disordered regions lie at residues 32-60 (KKKTSSSHSRNGKDDVNHDSTIQPRSPLS) and 237-327 (APKE…RWSA). Residues 50 to 60 (DSTIQPRSPLS) are compositionally biased toward polar residues. 2 stretches are compositionally biased toward basic and acidic residues: residues 263–291 (EVKRSERNCKRKREAEASSKDNNGDEGKK) and 309–327 (RTVESKDGDPRHGKDRWSA). Positions 448-547 (VEELTEEVNG…LEEQVTYLSS (100 aa)) form a coiled coil.

Its subcellular location is the nucleus. The protein localises to the chromosome. Its function is as follows. Plays a fundamental role in building the proper chromosome structure at the beginning of meiosis in male meiocytes. Required for the transition from leptotene to zygotene in meiocytes. Required for homologous chromosome pairing, and initiation and progression of meiotic recombination. Regulates meiocyte cytoskeleton organization. The chain is Protein AMEIOTIC 1 from Zea mays (Maize).